We begin with the raw amino-acid sequence, 181 residues long: Small ribosomal subunit protein uS4 (181 aa).

The S4 RNA-binding domain occupies 104 to 166 (RRLQTIVYKK…VTSSFKSRPP (63 aa)).

Belongs to the universal ribosomal protein uS4 family. In terms of assembly, part of the 30S ribosomal subunit. Contacts protein S5. The interaction surface between S4 and S5 is involved in control of translational fidelity.

Its function is as follows. One of the primary rRNA binding proteins, it binds directly to 16S rRNA where it nucleates assembly of the body of the 30S subunit. Functionally, with S5 and S12 plays an important role in translational accuracy. The polypeptide is Small ribosomal subunit protein uS4 (Saccharolobus islandicus (strain Y.N.15.51 / Yellowstone #2) (Sulfolobus islandicus)).